The sequence spans 83 residues: DNA-directed RNA polymerase subunit Rpo5 (83 aa).

Belongs to the archaeal Rpo5/eukaryotic RPB5 RNA polymerase subunit family. Part of the RNA polymerase complex.

The protein resides in the cytoplasm. The catalysed reaction is RNA(n) + a ribonucleoside 5'-triphosphate = RNA(n+1) + diphosphate. Its function is as follows. DNA-dependent RNA polymerase (RNAP) catalyzes the transcription of DNA into RNA using the four ribonucleoside triphosphates as substrates. This Metallosphaera sedula (strain ATCC 51363 / DSM 5348 / JCM 9185 / NBRC 15509 / TH2) protein is DNA-directed RNA polymerase subunit Rpo5.